The following is a 225-amino-acid chain: Peptidyl-tRNA hydrolase (225 aa).

TRNA is bound at residue tyrosine 14. The Proton acceptor role is filled by histidine 19. TRNA is bound by residues phenylalanine 64, asparagine 66, and asparagine 112. The disordered stretch occupies residues 187 to 225 (MQPPKPEKPKGEAKPAAPEAPEAAPDTRSALQRLADRFR). Low complexity predominate over residues 200 to 210 (KPAAPEAPEAA).

The protein belongs to the PTH family. As to quaternary structure, monomer.

It localises to the cytoplasm. The catalysed reaction is an N-acyl-L-alpha-aminoacyl-tRNA + H2O = an N-acyl-L-amino acid + a tRNA + H(+). Its function is as follows. Hydrolyzes ribosome-free peptidyl-tRNAs (with 1 or more amino acids incorporated), which drop off the ribosome during protein synthesis, or as a result of ribosome stalling. In terms of biological role, catalyzes the release of premature peptidyl moieties from peptidyl-tRNA molecules trapped in stalled 50S ribosomal subunits, and thus maintains levels of free tRNAs and 50S ribosomes. This Cereibacter sphaeroides (strain ATCC 17025 / ATH 2.4.3) (Rhodobacter sphaeroides) protein is Peptidyl-tRNA hydrolase.